Consider the following 246-residue polypeptide: 1-(5-phosphoribosyl)-5-[(5-phosphoribosylamino)methylideneamino] imidazole-4-carboxamide isomerase (246 aa).

The Proton acceptor role is filled by aspartate 8. Aspartate 131 acts as the Proton donor in catalysis.

It belongs to the HisA/HisF family.

Its subcellular location is the cytoplasm. The catalysed reaction is 1-(5-phospho-beta-D-ribosyl)-5-[(5-phospho-beta-D-ribosylamino)methylideneamino]imidazole-4-carboxamide = 5-[(5-phospho-1-deoxy-D-ribulos-1-ylimino)methylamino]-1-(5-phospho-beta-D-ribosyl)imidazole-4-carboxamide. The protein operates within amino-acid biosynthesis; L-histidine biosynthesis; L-histidine from 5-phospho-alpha-D-ribose 1-diphosphate: step 4/9. The polypeptide is 1-(5-phosphoribosyl)-5-[(5-phosphoribosylamino)methylideneamino] imidazole-4-carboxamide isomerase (Delftia acidovorans (strain DSM 14801 / SPH-1)).